Reading from the N-terminus, the 290-residue chain is Glycine--tRNA ligase alpha subunit (290 aa).

It belongs to the class-II aminoacyl-tRNA synthetase family. As to quaternary structure, tetramer of two alpha and two beta subunits.

It localises to the cytoplasm. The enzyme catalyses tRNA(Gly) + glycine + ATP = glycyl-tRNA(Gly) + AMP + diphosphate. The protein is Glycine--tRNA ligase alpha subunit of Syntrophobacter fumaroxidans (strain DSM 10017 / MPOB).